A 376-amino-acid polypeptide reads, in one-letter code: uncharacterized protein (376 aa).

Composition is skewed to low complexity over residues Asn-73–Asn-99 and Ser-228–Ser-243. 2 disordered regions span residues Asn-73–Leu-100 and Glu-222–Asp-269.

This is an uncharacterized protein from Saccharomyces cerevisiae (strain ATCC 204508 / S288c) (Baker's yeast).